A 279-amino-acid polypeptide reads, in one-letter code: Phage-like element PBSX protein XepA (279 aa).

To B.subtilis YqxG/YqdC.

Its function is as follows. Not known; does not seem to be involved in host cell lysis. In Bacillus subtilis (strain 168), this protein is Phage-like element PBSX protein XepA (xepA).